The sequence spans 357 residues: Fluoren-9-ol dehydrogenase (357 aa).

NADP(+) contacts are provided by residues 36-67 and D87; that span reads VTGG…TWDD. Y198 acts as the Proton acceptor in catalysis. K202 contacts NADP(+).

The protein belongs to the short-chain dehydrogenases/reductases (SDR) family.

The enzyme catalyses 9H-fluoren-9-ol + NADP(+) = 9H-fluoren-9-one + NADPH + H(+). The catalysed reaction is 9H-fluoren-9-ol + NAD(+) = 9H-fluoren-9-one + NADH + H(+). It functions in the pathway aromatic compound metabolism. In terms of biological role, catalyzes the dehydrogenation of both 9-fluorenol and 1,1a-dihydroxy-1-hydro-9-fluorenone to produce 9-fluorenone and 2'-carboxy-2,3- dihydroxybiphenyl, respectively. This is Fluoren-9-ol dehydrogenase from Terrabacter sp. (strain DBF63).